The following is a 96-amino-acid chain: MPRLSVQEIDQALKGLRNWRFENGELVKEFKFADFDSSIRFLNMVQPVADSLDHHPDLCVYYNRVIVHLTTHDEGGVTDLDLKLAQKLDELEKMVH.

This sequence belongs to the pterin-4-alpha-carbinolamine dehydratase family.

It carries out the reaction (4aS,6R)-4a-hydroxy-L-erythro-5,6,7,8-tetrahydrobiopterin = (6R)-L-erythro-6,7-dihydrobiopterin + H2O. The chain is Putative pterin-4-alpha-carbinolamine dehydratase from Metallosphaera sedula (strain ATCC 51363 / DSM 5348 / JCM 9185 / NBRC 15509 / TH2).